A 159-amino-acid chain; its full sequence is Fimbrial protein EcpB (159 aa).

A propeptide spans 1–6 (leader sequence); that stretch reads MYKQKG. An N-methylphenylalanine modification is found at Phe-7. The chain crosses the membrane as a helical span at residues 7–29; the sequence is FTLIELMIVIAIIGILAAIALPL. Cys-137 and Cys-156 form a disulfide bridge.

This sequence belongs to the N-Me-Phe pilin family.

It localises to the fimbrium. Its subcellular location is the membrane. The protein is Fimbrial protein EcpB (ecpB) of Eikenella corrodens.